The sequence spans 517 residues: GMP synthase [glutamine-hydrolyzing] (517 aa).

Positions 9–199 (RILILDFGSQ…VLGVCGCERL (191 aa)) constitute a Glutamine amidotransferase type-1 domain. Catalysis depends on Cys86, which acts as the Nucleophile. Active-site residues include His173 and Glu175. The GMPS ATP-PPase domain maps to 200-392 (WTSESIIEDA…LGLPYNMLYR (193 aa)). 227–233 (SGGVDSS) contacts ATP.

Homodimer.

The catalysed reaction is XMP + L-glutamine + ATP + H2O = GMP + L-glutamate + AMP + diphosphate + 2 H(+). Its pathway is purine metabolism; GMP biosynthesis; GMP from XMP (L-Gln route): step 1/1. Catalyzes the synthesis of GMP from XMP. The sequence is that of GMP synthase [glutamine-hydrolyzing] from Vibrio campbellii (strain ATCC BAA-1116).